Reading from the N-terminus, the 283-residue chain is MNDSILLGLIGQGLDLSRTPAMHEAEGLAQGRATVYRRIDTLGSRASGQDLKTLLDAALYLGFNGLNITHPYKQAVLPLLDEVSEQATQLGAVNTVVIDANGHTTGHNTDVSGFGRGMEEGLPNAKLDSVVQVGAGGVGNAVAYALVTHGVQKLQVADLDTSRAQALADVINNAVGREAVVGVDARGIEDVIAAADGVVNATPMGMPAHPGTAFDVSCLTKDHWVGDVVYMPIETELLKAARALGCETLDGTRMAIHQAVDAFRLFTGLEPDVSRMRETFLSL.

Residues Ser17, Thr69, Lys73, Asn94, and Asp110 each contribute to the shikimate site. L-quinate is bound by residues 17–19 (SRT), Thr69, Lys73, Asn94, and Asp110. Catalysis depends on Lys73, which acts as the Proton acceptor. NAD(+) is bound by residues 137-138 (GV), Asp158, Arg163, 203-206 (PMGM), Ala213, Val228, and Gly251. Gln258 lines the shikimate pocket. Gln258 lines the L-quinate pocket.

This sequence belongs to the shikimate dehydrogenase family. As to quaternary structure, homodimer.

It carries out the reaction L-quinate + NAD(+) = 3-dehydroquinate + NADH + H(+). It catalyses the reaction shikimate + NAD(+) = 3-dehydroshikimate + NADH + H(+). It participates in metabolic intermediate biosynthesis; chorismate biosynthesis; chorismate from D-erythrose 4-phosphate and phosphoenolpyruvate: step 4/7. The protein operates within aromatic compound metabolism; 3,4-dihydroxybenzoate biosynthesis; 3-dehydroquinate from D-quinate (NAD(+) route). Functionally, involved in the biosynthesis of the chorismate, which leads to the biosynthesis of aromatic amino acids, and plays a key role in the quinate degradation pathway. Catalyzes the NAD(+)-dependent oxidation of both quinate and shikimate to 3-dehydroquinate and 3-dehydroshikimate, respectively. The chain is Quinate/shikimate dehydrogenase (NAD(+)) from Corynebacterium glutamicum (strain R).